A 428-amino-acid polypeptide reads, in one-letter code: MTQVFQKVSAIRGMNDVLPGPSARWEKFEEIVRGWLRSYGYRNVRTPVLEHTRLFARGIGEVTDIVEKEMYTFTDALNGDSLTMRPEMTAGIVRASIEHNMLYDRPHRVYAIGPVFRHERPQRGRYRQFHQIDVEALGFAGPDVDAEMIVMLARLWKLLGLQDVRLELNSLGQPAERAAHRAALIEHLERHQDVLDEDGRRRMYSNPLRVLDTKNPAMQEMADSAPRLFDFLGEASRSHFDGLCQRLADAGIEYRLNPRLVRGLDYYNLTVFEWVTDRLGAQGTVCGGGRYDGLVELLGGKPTPAVGFAIGMERLLDLWEQSVEIEQPAECEVYIVHQGEEGQRLAARVGEQLRDAGLDVIVHAGAAGFKAQFKRADASGARIAVILGGDEVASRTASIKHLRGPVGADAAQQQVPLAQLADVLKSKG.

It belongs to the class-II aminoacyl-tRNA synthetase family. Homodimer.

It localises to the cytoplasm. It carries out the reaction tRNA(His) + L-histidine + ATP = L-histidyl-tRNA(His) + AMP + diphosphate + H(+). The protein is Histidine--tRNA ligase of Bordetella pertussis (strain Tohama I / ATCC BAA-589 / NCTC 13251).